Here is a 171-residue protein sequence, read N- to C-terminus: UPF0398 protein M6_Spy1399 (171 aa).

Belongs to the UPF0398 family.

The chain is UPF0398 protein M6_Spy1399 from Streptococcus pyogenes serotype M6 (strain ATCC BAA-946 / MGAS10394).